A 177-amino-acid polypeptide reads, in one-letter code: Interleukin-1 receptor antagonist protein (177 aa).

The N-terminal stretch at 1-25 (MEVCRCHHGYLISLLLFLFHSETAC) is a signal peptide. A disulfide bond links cysteine 91 and cysteine 141. N-linked (GlcNAc...) asparagine glycans are attached at residues asparagine 109 and asparagine 114.

The protein belongs to the IL-1 family.

The protein resides in the secreted. In terms of biological role, anti-inflammatory antagonist of interleukin-1 family of proinflammatory cytokines such as interleukin-1beta/IL1B and interleukin-1alpha/IL1A. Protects from immune dysregulation and uncontrolled systemic inflammation triggered by IL1 for a range of innate stimulatory agents such as pathogens. The sequence is that of Interleukin-1 receptor antagonist protein (IL1RN) from Tursiops truncatus (Atlantic bottle-nosed dolphin).